The sequence spans 161 residues: Cyclic pyranopterin monophosphate synthase (161 aa).

Residues methionine 75 to histidine 77 and methionine 115 to glutamate 116 contribute to the substrate site. Residue aspartate 130 is part of the active site.

It belongs to the MoaC family. As to quaternary structure, homohexamer; trimer of dimers.

It catalyses the reaction (8S)-3',8-cyclo-7,8-dihydroguanosine 5'-triphosphate = cyclic pyranopterin phosphate + diphosphate. It participates in cofactor biosynthesis; molybdopterin biosynthesis. In terms of biological role, catalyzes the conversion of (8S)-3',8-cyclo-7,8-dihydroguanosine 5'-triphosphate to cyclic pyranopterin monophosphate (cPMP). This Bacillus cereus (strain 03BB102) protein is Cyclic pyranopterin monophosphate synthase.